The following is a 119-amino-acid chain: MLPAQHRMTRSTEFGATVSKGTRAAQPDVVVYRLRSDQTADPGPRVGLIVSKAVGNAVQRHRVSRRLRHAALAVLEDLDPSDRVVIRALPRSRDAVTPRLEQELRTALERIRQRTGAPS.

The tract at residues 1–20 (MLPAQHRMTRSTEFGATVSK) is disordered.

It belongs to the RnpA family. As to quaternary structure, consists of a catalytic RNA component (M1 or rnpB) and a protein subunit.

The enzyme catalyses Endonucleolytic cleavage of RNA, removing 5'-extranucleotides from tRNA precursor.. In terms of biological role, RNaseP catalyzes the removal of the 5'-leader sequence from pre-tRNA to produce the mature 5'-terminus. It can also cleave other RNA substrates such as 4.5S RNA. The protein component plays an auxiliary but essential role in vivo by binding to the 5'-leader sequence and broadening the substrate specificity of the ribozyme. This chain is Ribonuclease P protein component, found in Mycolicibacterium vanbaalenii (strain DSM 7251 / JCM 13017 / BCRC 16820 / KCTC 9966 / NRRL B-24157 / PYR-1) (Mycobacterium vanbaalenii).